A 333-amino-acid polypeptide reads, in one-letter code: D-lactate dehydrogenase (333 aa).

Residues 156-157 (HI), D176, 207-208 (VP), N213, 234-236 (VSR), and D260 each bind NAD(+). The active site involves R236. E265 is a catalytic residue. Catalysis depends on H297, which acts as the Proton donor.

This sequence belongs to the D-isomer specific 2-hydroxyacid dehydrogenase family. In terms of assembly, homodimer.

It catalyses the reaction (R)-lactate + NAD(+) = pyruvate + NADH + H(+). The protein is D-lactate dehydrogenase (ldhA) of Lactobacillus delbrueckii subsp. bulgaricus (strain ATCC 11842 / DSM 20081 / BCRC 10696 / JCM 1002 / NBRC 13953 / NCIMB 11778 / NCTC 12712 / WDCM 00102 / Lb 14).